Here is a 168-residue protein sequence, read N- to C-terminus: 3-hydroxyacyl-[acyl-carrier-protein] dehydratase FabZ (168 aa).

Residue H54 is part of the active site.

Belongs to the thioester dehydratase family. FabZ subfamily.

The protein localises to the cytoplasm. It catalyses the reaction a (3R)-hydroxyacyl-[ACP] = a (2E)-enoyl-[ACP] + H2O. Its function is as follows. Involved in unsaturated fatty acids biosynthesis. Catalyzes the dehydration of short chain beta-hydroxyacyl-ACPs and long chain saturated and unsaturated beta-hydroxyacyl-ACPs. The protein is 3-hydroxyacyl-[acyl-carrier-protein] dehydratase FabZ of Yersinia enterocolitica serotype O:8 / biotype 1B (strain NCTC 13174 / 8081).